The chain runs to 586 residues: DNA-binding protein RFX8 (586 aa).

Positions 22 to 97 form a DNA-binding region, RFX-type winged-helix; that stretch reads VIQWLVDNFC…YHYDGICIKK (76 aa).

This sequence belongs to the RFX family.

It localises to the nucleus. Functionally, may be a transcription factor. In Homo sapiens (Human), this protein is DNA-binding protein RFX8 (RFX8).